We begin with the raw amino-acid sequence, 637 residues long: Sodium-dependent nutrient amino acid transporter 1 (637 aa).

Polar residues predominate over residues 1 to 17 (MELKTMPQNGANAGTQH). Positions 1–39 (MELKTMPQNGANAGTQHNNNSNNKPDNNEKEAQKKEPER) are disordered. The Cytoplasmic portion of the chain corresponds to 1–47 (MELKTMPQNGANAGTQHNNNSNNKPDNNEKEAQKKEPERTNWSNGLE). Positions 26-39 (DNNEKEAQKKEPER) are enriched in basic and acidic residues. Transmembrane regions (helical) follow at residues 48–68 (FLMS…FPFT), 75–95 (GAFL…MYYL), and 128–148 (TICI…YLFV). Asn-181 and Asn-195 each carry an N-linked (GlcNAc...) asparagine glycan. 9 helical membrane-spanning segments follow: residues 225-245 (PDWK…LVIM), 254-274 (AAYF…GRAV), 303-323 (AVVQ…MFAS), 337-357 (IVTT…FAIL), 397-417 (LFSA…IVAL), 443-463 (ICGF…ILTL), 470-490 (TYVV…IYGL), 515-535 (FFTP…ISPI), and 549-569 (AGWV…WWYI).

This sequence belongs to the sodium:neurotransmitter symporter (SNF) (TC 2.A.22) family.

The protein resides in the membrane. Functionally, unusual broad substrate spectrum amino acid:sodium cotransporter that promotes absorption of the D isomers of essential amino acids. Neutral amino acids are the preferred substrates, especially methionine and phenylalanine. This is Sodium-dependent nutrient amino acid transporter 1 from Drosophila virilis (Fruit fly).